Reading from the N-terminus, the 266-residue chain is MAAVPELSSEVTAYHSDENELFFEVDGPNKMQYCFQDRDLCSLDEGIKLQISHQHFNKSFRQTVSLIVAVEKLRKKLAPCTWAFQDDDLRPLLPFIFEEEPIVCDTWDEEYESDTPVPSRNCTLHDIQHKRLVLSDPCELKALHLNGDNLNRQVVFSMSFVQGERSDNKMPVALGLKGKNLYLSCVMKDGKPVLQLESVDGKQYPKKKMEKRFVFNKITSKSTVEFESAQFPNWYISTSQAEHKPVFLGNNNGQDIIDFKLELVSS.

Positions 1–114 are excised as a propeptide; it reads MAAVPELSSE…DTWDEEYESD (114 aa).

This sequence belongs to the IL-1 family. In terms of assembly, monomer. In its precursor form, weakly interacts with full-length MEFV; the mature cytokine does not interact at all. Interacts with integrins ITGAV:ITGBV and ITGA5:ITGB1; integrin-binding is required for IL1B signaling. Interacts with cargo receptor TMED10; the interaction is direct and is required for the secretion of IL1B mature form. Interacts with HSP90AB1; the interaction facilitates cargo translocation into the ERGIC. Interacts with HSP90B1; the interaction facilitates cargo translocation into the ERGIC.

It localises to the cytoplasm. The protein localises to the cytosol. Its subcellular location is the secreted. It is found in the lysosome. The protein resides in the extracellular exosome. Functionally, potent pro-inflammatory cytokine. Initially discovered as the major endogenous pyrogen, induces prostaglandin synthesis, neutrophil influx and activation, T-cell activation and cytokine production, B-cell activation and antibody production, and fibroblast proliferation and collagen production. Promotes Th17 differentiation of T-cells. Synergizes with IL12/interleukin-12 to induce IFNG synthesis from T-helper 1 (Th1) cells. Plays a role in angiogenesis by inducing VEGF production synergistically with TNF and IL6. Involved in transduction of inflammation downstream of pyroptosis: its mature form is specifically released in the extracellular milieu by passing through the gasdermin-D (GSDMD) pore. This chain is Interleukin-1 beta (IL1B), found in Cavia porcellus (Guinea pig).